A 248-amino-acid chain; its full sequence is ATP synthase subunit a, chloroplastic (248 aa).

Helical transmembrane passes span 39–59 (QVLI…ILAV), 96–116 (VPFI…GALF), 135–155 (INTT…AGLT), 200–220 (LVVV…VMFL), and 221–241 (GLFT…AYIG).

The protein belongs to the ATPase A chain family. In terms of assembly, F-type ATPases have 2 components, CF(1) - the catalytic core - and CF(0) - the membrane proton channel. CF(1) has five subunits: alpha(3), beta(3), gamma(1), delta(1), epsilon(1). CF(0) has four main subunits: a, b, b' and c.

Its subcellular location is the plastid. It is found in the chloroplast thylakoid membrane. Functionally, key component of the proton channel; it plays a direct role in the translocation of protons across the membrane. The polypeptide is ATP synthase subunit a, chloroplastic (Pelargonium hortorum (Common geranium)).